A 297-amino-acid polypeptide reads, in one-letter code: MKHIINSYENINNTARNNSDCPRVVLPEEIFFTISIVGVLENLIVLLAVFKNKNLQAPMYFFICSLAISDMLGSLYKILENILIILRNMGYLKPRGSFETTADDIIDSLFVLSLLGSIFSLSVIAADRYITIFHALRYHSIVTMRRTVVVLTVIWTFCTGTGITMVIFSHHVPTVITFTSLFPLMLVFILCLYVHMFLLARSHTRKISTLPRANMKGAITLTILLGVFIFCWAPFVLHVLLMTFCPSNPYCACYMSLFQVNGMLIMCNAVIDPFIYAFRSPELRDAFKKMIFCSRYW.

The Extracellular segment spans residues 1–23; the sequence is MKHIINSYENINNTARNNSDCPR. 2 N-linked (GlcNAc...) asparagine glycosylation sites follow: asparagine 12 and asparagine 17. Intrachain disulfides connect cysteine 21-cysteine 253 and cysteine 245-cysteine 251. A helical transmembrane segment spans residues 24–49; the sequence is VVLPEEIFFTISIVGVLENLIVLLAV. At 50 to 58 the chain is on the cytoplasmic side; it reads FKNKNLQAP. A helical membrane pass occupies residues 59–79; sequence MYFFICSLAISDMLGSLYKIL. The Extracellular portion of the chain corresponds to 80–104; that stretch reads ENILIILRNMGYLKPRGSFETTADD. A helical transmembrane segment spans residues 105-126; it reads IIDSLFVLSLLGSIFSLSVIAA. Topologically, residues 127-147 are cytoplasmic; that stretch reads DRYITIFHALRYHSIVTMRRT. A helical transmembrane segment spans residues 148–168; that stretch reads VVVLTVIWTFCTGTGITMVIF. The Extracellular portion of the chain corresponds to 169–180; it reads SHHVPTVITFTS. Residues 181-199 form a helical membrane-spanning segment; it reads LFPLMLVFILCLYVHMFLL. Topologically, residues 200–217 are cytoplasmic; that stretch reads ARSHTRKISTLPRANMKG. A helical transmembrane segment spans residues 218–244; that stretch reads AITLTILLGVFIFCWAPFVLHVLLMTF. Topologically, residues 245–256 are extracellular; it reads CPSNPYCACYMS. The chain crosses the membrane as a helical span at residues 257–278; it reads LFQVNGMLIMCNAVIDPFIYAF. Over 279–297 the chain is Cytoplasmic; it reads RSPELRDAFKKMIFCSRYW. Residue cysteine 293 is the site of S-palmitoyl cysteine attachment.

The protein belongs to the G-protein coupled receptor 1 family. As to quaternary structure, homodimer. Interacts with corticotropin (ACTH). Interacts with MRAP; this interaction targets MC2R to the plasma membrane. Interacts with MRAP2; competing with MRAP for binding to MC2R and impairing the binding of corticotropin (ACTH). Ubiquitinated by MGRN1 that may be involved in post-endocytic trafficking and/or degradation of internalized receptor. In terms of tissue distribution, melanocytes and corticoadrenal tissue.

It localises to the cell membrane. Hormone receptor primarily expressed in adrenal cortex that plays a key role in regulating adrenocortical function. Upon corticotropin (ACTH) binding, facilitates the release of adrenal glucocorticoids, including cortisol and corticosterone. In addition, MC2R is required for fetal and neonatal adrenal gland development. Mechanistically, activates adenylate cyclase (cAMP), the MAPK cascade as well as the cAMP-dependent protein kinase A pathway leading to steroidogenic factor 1/NR5A1-mediated transcriptional activation. This Homo sapiens (Human) protein is Adrenocorticotropic hormone receptor (MC2R).